Consider the following 641-residue polypeptide: uncharacterized protein (641 aa).

Ser112 is modified (phosphoserine). Disordered regions lie at residues 118 to 243 (STSI…LDPT), 261 to 289 (KSPR…TVSI), 355 to 386 (DKSD…RLEA), and 404 to 430 (DGEG…QSHS). Polar residues predominate over residues 132 to 162 (ASVSSQYPHRTFQKQVNKTCVSKSDGPSGNG). Position 198 is a phosphoserine (Ser198). Composition is skewed to polar residues over residues 222 to 234 (NQEL…SRSN) and 278 to 289 (RQASSAGDTVSI). Residues 355-368 (DKSDGDQREEDCVR) are compositionally biased toward basic and acidic residues. 2 stretches are compositionally biased toward low complexity: residues 374 to 383 (RSSSPTSPTR) and 421 to 430 (SSSAAVQSHS).

This is an uncharacterized protein from Mus musculus (Mouse).